The chain runs to 185 residues: Peptidyl-tRNA hydrolase (185 aa).

Residue Tyr14 coordinates tRNA. The active-site Proton acceptor is the His19. TRNA-binding residues include Phe64, Asn66, and Asn112.

Belongs to the PTH family. As to quaternary structure, monomer.

It localises to the cytoplasm. It catalyses the reaction an N-acyl-L-alpha-aminoacyl-tRNA + H2O = an N-acyl-L-amino acid + a tRNA + H(+). Its function is as follows. Hydrolyzes ribosome-free peptidyl-tRNAs (with 1 or more amino acids incorporated), which drop off the ribosome during protein synthesis, or as a result of ribosome stalling. In terms of biological role, catalyzes the release of premature peptidyl moieties from peptidyl-tRNA molecules trapped in stalled 50S ribosomal subunits, and thus maintains levels of free tRNAs and 50S ribosomes. This is Peptidyl-tRNA hydrolase from Halalkalibacterium halodurans (strain ATCC BAA-125 / DSM 18197 / FERM 7344 / JCM 9153 / C-125) (Bacillus halodurans).